A 180-amino-acid polypeptide reads, in one-letter code: NADH-quinone oxidoreductase subunit I (180 aa).

4Fe-4S ferredoxin-type domains follow at residues 50-80 (LTRD…LQKA) and 90-119 (EFFR…LTPD). Residues Cys60, Cys63, Cys66, Cys70, Cys99, Cys102, Cys105, and Cys109 each coordinate [4Fe-4S] cluster.

It belongs to the complex I 23 kDa subunit family. In terms of assembly, NDH-1 is composed of 13 different subunits. Subunits NuoA, H, J, K, L, M, N constitute the membrane sector of the complex. [4Fe-4S] cluster serves as cofactor.

The protein resides in the cell inner membrane. It catalyses the reaction a quinone + NADH + 5 H(+)(in) = a quinol + NAD(+) + 4 H(+)(out). NDH-1 shuttles electrons from NADH, via FMN and iron-sulfur (Fe-S) centers, to quinones in the respiratory chain. The immediate electron acceptor for the enzyme in this species is believed to be ubiquinone. Couples the redox reaction to proton translocation (for every two electrons transferred, four hydrogen ions are translocated across the cytoplasmic membrane), and thus conserves the redox energy in a proton gradient. The protein is NADH-quinone oxidoreductase subunit I of Yersinia pseudotuberculosis serotype O:1b (strain IP 31758).